Reading from the N-terminus, the 927-residue chain is Sodium/calcium exchanger 3 (927 aa).

A signal peptide spans 1–30; sequence MAWLRLQPLTSAFLHFGLVTFVLFLNGLRA. Residues 31 to 73 lie on the Extracellular side of the membrane; the sequence is EAGDLRDVPSAGQNNESCSGSSDCKEGVILPIWYPENPSLGDK. Asparagine 45 carries N-linked (GlcNAc...) asparagine glycosylation. Residues 74-94 traverse the membrane as a helical segment; sequence IARVIVYFVALIYMFLGVSII. The Cytoplasmic portion of the chain corresponds to 95 to 147; that stretch reads ADRFMASIEVITSQEREVTIKKPNGETSTTTIRVWNETVSNLTLMALGSSAPE. One copy of the Alpha-1 repeat lies at 140–180; it reads ALGSSAPEILLSLIEVCGHGFIAGDLGPSTIVGSAAFNMFI. The helical transmembrane segment at 148–168 threads the bilayer; that stretch reads ILLSLIEVCGHGFIAGDLGPS. A topological domain (extracellular) is located at residue threonine 169. A helical membrane pass occupies residues 170–190; the sequence is IVGSAAFNMFIIIGICVYVIP. Residues 191–202 lie on the Cytoplasmic side of the membrane; sequence DGETRKIKHLRV. The chain crosses the membrane as a helical span at residues 203 to 223; that stretch reads FFVTAAWSVFAYIWLYMILAV. Residues 224 to 230 lie on the Extracellular side of the membrane; it reads FSPGVVQ. Residues 231–251 form a helical membrane-spanning segment; it reads VWEGLLTLFFFPVCVLLAWVA. The Cytoplasmic portion of the chain corresponds to 252 to 726; that stretch reads DKRLLFYKYM…DESGEERLPS (475 aa). Residues 253-272 form a putative calmodulin-binding region region; that stretch reads KRLLFYKYMHKRYRTDKHRG. 2 Calx-beta domains span residues 386-485 and 519-619; these read VHTD…VRLS and ATVT…IALG. Residues glutamate 409, aspartate 445, aspartate 470, aspartate 471, isoleucine 473, glutamate 475, glutamate 478, aspartate 525, aspartate 526, aspartate 527, glutamate 543, aspartate 579, glutamate 606, glutamate 607, and glutamate 672 each contribute to the Ca(2+) site. The helical transmembrane segment at 727–747 threads the bilayer; that stretch reads CFDYVMHFLTVFWKVLFACVP. Over 748 to 754 the chain is Extracellular; that stretch reads PTEYCHG. Residues 755-775 traverse the membrane as a helical segment; the sequence is WACFVVSILIIGMLTAIIGDL. At 776 to 778 the chain is on the cytoplasmic side; it reads ASH. A helical membrane pass occupies residues 779–799; the sequence is FGCTIGLKDSVTAVVFVAFGT. The stretch at 796 to 832 is one Alpha-2 repeat; that stretch reads AFGTSVPDTFASKAAALQDVYADASIGNVTGSNAVNV. Residues 800-828 lie on the Extracellular side of the membrane; sequence SVPDTFASKAAALQDVYADASIGNVTGSN. An N-linked (GlcNAc...) asparagine glycan is attached at asparagine 823. A helical transmembrane segment spans residues 829 to 849; sequence AVNVFLGIGLAWSVAAIYWAM. Residues 850–860 are Cytoplasmic-facing; that stretch reads QGQEFHVSAGT. A helical membrane pass occupies residues 861–881; it reads LAFSVTLFTIFAFVCLSVLLY. Topologically, residues 882–903 are extracellular; that stretch reads RRRPHLGGELGGPRGCKLATTW. A helical transmembrane segment spans residues 904–924; it reads LFVSLWLLYVLFATLEAYCYI. Over 925–927 the chain is Cytoplasmic; sequence KGF.

This sequence belongs to the Ca(2+):cation antiporter (CaCA) (TC 2.A.19) family. SLC8 subfamily. Interacts with AKAP1. In terms of tissue distribution, detected in neurons in brain cortex and hippocampus. Detected in pyramidal cell bodies and processes, in granule cells and interneurons in the CA1 and CA3 region of the hippocampus. Detected on astrocyte processes in brain cortex. Detected on endothelial cells in hippocampus capillaries (at protein level). Restricted to brain and skeletal muscle.

It is found in the cell membrane. It localises to the perikaryon. The protein resides in the cell projection. The protein localises to the dendrite. Its subcellular location is the dendritic spine. It is found in the sarcolemma. It localises to the cytoplasm. The protein resides in the sarcoplasm. The protein localises to the cell junction. Its subcellular location is the mitochondrion outer membrane. It is found in the endoplasmic reticulum membrane. It localises to the perinuclear region. It carries out the reaction Ca(2+)(in) + 3 Na(+)(out) = Ca(2+)(out) + 3 Na(+)(in). With respect to regulation, calcium transport is down-regulated by Na(+) and stimulated by Ca(2+). Its function is as follows. Mediates the electrogenic exchange of Ca(2+) against Na(+) ions across the cell membrane, and thereby contributes to the regulation of cytoplasmic Ca(2+) levels and Ca(2+)-dependent cellular processes. Contributes to cellular Ca(2+) homeostasis in excitable cells, both in muscle and in brain. In a first phase, voltage-gated channels mediate the rapid increase of cytoplasmic Ca(2+) levels due to release of Ca(2+) stores from the endoplasmic reticulum. SLC8A3 mediates the export of Ca(2+) from the cell during the next phase, so that cytoplasmic Ca(2+) levels rapidly return to baseline. Contributes to Ca(2+) transport during excitation-contraction coupling in muscle. In neurons, contributes to the rapid decrease of cytoplasmic Ca(2+) levels back to baseline after neuronal activation, and thereby contributes to modulate synaptic plasticity, learning and memory. Required for normal oligodendrocyte differentiation and for normal myelination. Mediates Ca(2+) efflux from mitochondria and contributes to mitochondrial Ca(2+) ion homeostasis. The sequence is that of Sodium/calcium exchanger 3 (Slc8a3) from Rattus norvegicus (Rat).